We begin with the raw amino-acid sequence, 147 residues long: Transmembrane protein 210 (147 aa).

The first 31 residues, 1 to 31 (MAPGPWPVSCLRGGPLGLTYLSLLLIPAAAG), serve as a signal peptide directing secretion. Topologically, residues 32–47 (TYCECSLGLSREALIA) are extracellular. Residues 48–68 (LLVVLAGISASCFCALVIVAI) traverse the membrane as a helical segment. The Cytoplasmic portion of the chain corresponds to 69-147 (GVLRAKGETC…PPPPPPLPPE (79 aa)). A disordered region spans residues 128 to 147 (AIPMEASSEEPPPPPPLPPE). Positions 137–147 (EPPPPPPLPPE) are enriched in pro residues.

The protein localises to the membrane. Its subcellular location is the cytoplasmic vesicle. It localises to the secretory vesicle. The protein resides in the acrosome. This is Transmembrane protein 210 (TMEM210) from Homo sapiens (Human).